A 273-amino-acid polypeptide reads, in one-letter code: Translation initiation factor IF-3, mitochondrial (273 aa).

A mitochondrion-targeting transit peptide spans 1–32 (MAALFLKKLTLQTVKTENYCIRRCLGKYILQG). A propeptide spans 33-92 (PAPTQQPPRPSCLIHAKAFSTEDTQDEMTKKKKNETAFSSVGRKINERIIHVLDEQGNDL) (removed in mature form). Residues 242-273 (EEAAWKAAPDTPRRDALNGGDGKDGASGVLPQ) are disordered. Residues 252-265 (TPRRDALNGGDGKD) are compositionally biased toward basic and acidic residues.

It belongs to the IF-3 family.

It is found in the mitochondrion. Its function is as follows. IF-3 binds to the 28S ribosomal subunit and shifts the equilibrium between 55S ribosomes and their 39S and 28S subunits in favor of the free subunits, thus enhancing the availability of 28S subunits on which protein synthesis initiation begins. The sequence is that of Translation initiation factor IF-3, mitochondrial (MTIF3) from Bos taurus (Bovine).